A 346-amino-acid chain; its full sequence is MSTNKITFLTNWEATPYHLPIFLAQTRGYYEREGIEVAILEPTNPSDVTALIGSGKVDMGLKAMIHTLAAKARGYPVTSFGSLLNEPFTGLITLKGNGINDFKDIKGKRIGYVGEFGKIQLDDLCSKFGLSPSDYTAIRCGMNIAPAIINGEIDGGIGIECMQQVELERWCVSQGRPRSDVQMLRIDRLANLGCCCFCTILYIAHDEFIAKHPDKIKAFLRAIHSATLDMLKDPVQTYKEYIHFKREMGSELHREQFERCFAYFSHDISNVPRDWNKVTNYSKRLGIIPQDFEPNCTNGYLTWELDPDEKDPMGKQEAIAEIQDEIKQKGGVFSGNSLRYVEPANL.

Lys-62 bears the N6-(pyridoxal phosphate)lysine mark. His-66 is an active-site residue. Residue 114–117 (GEFG) participates in pyridoxal 5'-phosphate binding. A CCCFC; essential for catalytic activity, may be the site of iron coordination motif is present at residues 194–198 (CCCFC).

It belongs to the NMT1/THI5 family. As to quaternary structure, homodimer. Requires Fe cation as cofactor.

The protein resides in the cytoplasm. The protein localises to the nucleus. It catalyses the reaction N(6)-(pyridoxal phosphate)-L-lysyl-[4-amino-5-hydroxymethyl-2-methylpyrimidine phosphate synthase] + L-histidyl-[4-amino-5-hydroxymethyl-2-methylpyrimidine phosphate synthase] + 2 Fe(3+) + 4 H2O = L-lysyl-[4-amino-5-hydroxymethyl-2-methylpyrimidine phosphate synthase] + (2S)-2-amino-5-hydroxy-4-oxopentanoyl-[4-amino-5-hydroxymethyl-2-methylpyrimidine phosphate synthase] + 4-amino-2-methyl-5-(phosphooxymethyl)pyrimidine + 3-oxopropanoate + 2 Fe(2+) + 2 H(+). It participates in cofactor biosynthesis; thiamine diphosphate biosynthesis. Responsible for the formation of the pyrimidine heterocycle in the thiamine biosynthesis pathway. Catalyzes the formation of hydroxymethylpyrimidine phosphate (HMP-P) from histidine and pyridoxal phosphate (PLP). The protein uses PLP and the active site histidine to form HMP-P, generating an inactive enzyme. The enzyme can only undergo a single turnover, which suggests it is a suicide enzyme. This is 4-amino-5-hydroxymethyl-2-methylpyrimidine phosphate synthase from Schizosaccharomyces pombe (strain 972 / ATCC 24843) (Fission yeast).